Consider the following 373-residue polypeptide: Phosphoserine aminotransferase (373 aa).

Arg46 contributes to the L-glutamate binding site. Pyridoxal 5'-phosphate-binding residues include Phe104, Thr150, Asp172, and Gln195. Position 196 is an N6-(pyridoxal phosphate)lysine (Lys196). Residue 247–248 (NT) coordinates pyridoxal 5'-phosphate.

The protein belongs to the class-V pyridoxal-phosphate-dependent aminotransferase family. SerC subfamily. Homodimer. Pyridoxal 5'-phosphate is required as a cofactor.

The protein resides in the cytoplasm. The enzyme catalyses O-phospho-L-serine + 2-oxoglutarate = 3-phosphooxypyruvate + L-glutamate. The catalysed reaction is 4-(phosphooxy)-L-threonine + 2-oxoglutarate = (R)-3-hydroxy-2-oxo-4-phosphooxybutanoate + L-glutamate. It participates in amino-acid biosynthesis; L-serine biosynthesis; L-serine from 3-phospho-D-glycerate: step 2/3. Its pathway is cofactor biosynthesis; pyridoxine 5'-phosphate biosynthesis; pyridoxine 5'-phosphate from D-erythrose 4-phosphate: step 3/5. Its function is as follows. Catalyzes the reversible conversion of 3-phosphohydroxypyruvate to phosphoserine and of 3-hydroxy-2-oxo-4-phosphonooxybutanoate to phosphohydroxythreonine. In Rhodococcus opacus (strain B4), this protein is Phosphoserine aminotransferase.